The sequence spans 259 residues: NAD(P)H-quinone oxidoreductase subunit K 2 (259 aa).

Cys52, Cys53, Cys117, and Cys148 together coordinate [4Fe-4S] cluster.

It belongs to the complex I 20 kDa subunit family. In terms of assembly, NDH-1 can be composed of about 15 different subunits; different subcomplexes with different compositions have been identified which probably have different functions. The cofactor is [4Fe-4S] cluster.

The protein resides in the cellular thylakoid membrane. The catalysed reaction is a plastoquinone + NADH + (n+1) H(+)(in) = a plastoquinol + NAD(+) + n H(+)(out). It catalyses the reaction a plastoquinone + NADPH + (n+1) H(+)(in) = a plastoquinol + NADP(+) + n H(+)(out). Functionally, NDH-1 shuttles electrons from an unknown electron donor, via FMN and iron-sulfur (Fe-S) centers, to quinones in the respiratory and/or the photosynthetic chain. The immediate electron acceptor for the enzyme in this species is believed to be plastoquinone. Couples the redox reaction to proton translocation, and thus conserves the redox energy in a proton gradient. Cyanobacterial NDH-1 also plays a role in inorganic carbon-concentration. The polypeptide is NAD(P)H-quinone oxidoreductase subunit K 2 (ndhK2) (Cyanothece sp. (strain PCC 7425 / ATCC 29141)).